The following is a 465-amino-acid chain: ATP synthase subunit beta (465 aa).

152 to 159 (GGAGVGKT) provides a ligand contact to ATP.

The protein belongs to the ATPase alpha/beta chains family. In terms of assembly, F-type ATPases have 2 components, CF(1) - the catalytic core - and CF(0) - the membrane proton channel. CF(1) has five subunits: alpha(3), beta(3), gamma(1), delta(1), epsilon(1). CF(0) has three main subunits: a(1), b(2) and c(9-12). The alpha and beta chains form an alternating ring which encloses part of the gamma chain. CF(1) is attached to CF(0) by a central stalk formed by the gamma and epsilon chains, while a peripheral stalk is formed by the delta and b chains.

The protein resides in the cell inner membrane. The catalysed reaction is ATP + H2O + 4 H(+)(in) = ADP + phosphate + 5 H(+)(out). Its function is as follows. Produces ATP from ADP in the presence of a proton gradient across the membrane. The catalytic sites are hosted primarily by the beta subunits. This chain is ATP synthase subunit beta, found in Campylobacter hominis (strain ATCC BAA-381 / DSM 21671 / CCUG 45161 / LMG 19568 / NCTC 13146 / CH001A).